The chain runs to 357 residues: 3-isopropylmalate dehydrogenase (357 aa).

76–89 contacts NAD(+); it reads GPQWDTIDPALRPE. R96, R106, R134, and D224 together coordinate substrate. Residues D224, D248, and D252 each coordinate Mg(2+). An NAD(+)-binding site is contributed by 282-294; sequence GSAPDIAGQGVAN.

This sequence belongs to the isocitrate and isopropylmalate dehydrogenases family. LeuB type 1 subfamily. As to quaternary structure, homodimer. Requires Mg(2+) as cofactor. The cofactor is Mn(2+).

The protein resides in the cytoplasm. It carries out the reaction (2R,3S)-3-isopropylmalate + NAD(+) = 4-methyl-2-oxopentanoate + CO2 + NADH. Its pathway is amino-acid biosynthesis; L-leucine biosynthesis; L-leucine from 3-methyl-2-oxobutanoate: step 3/4. In terms of biological role, catalyzes the oxidation of 3-carboxy-2-hydroxy-4-methylpentanoate (3-isopropylmalate) to 3-carboxy-4-methyl-2-oxopentanoate. The product decarboxylates to 4-methyl-2 oxopentanoate. The chain is 3-isopropylmalate dehydrogenase from Xylella fastidiosa (strain 9a5c).